The following is a 396-amino-acid chain: Cathepsin D (396 aa).

The N-terminal stretch at 1–18 is a signal peptide; sequence MKFLYLFLFAVFAWTSDA. Residues 19–61 constitute a propeptide, activation peptide; it reads IVRIPLKKFRSIRRTLSDSGLNVEQLLAGTNSLQHNQGFPSSN. The 318-residue stretch at 76–393 folds into the Peptidase A1 domain; that stretch reads YYGEIGLGTP…DRESNRVGFA (318 aa). Aspartate 94 is a catalytic residue. The cysteines at positions 107 and 114 are disulfide-linked. N-linked (GlcNAc...) asparagine glycosylation is present at asparagine 131. A disulfide bridge connects residues cysteine 272 and cysteine 276. Aspartate 281 is a catalytic residue. Cysteine 315 and cysteine 352 are joined by a disulfide.

This sequence belongs to the peptidase A1 family. Monomer.

The protein localises to the lysosome. The catalysed reaction is Specificity similar to, but narrower than, that of pepsin A. Does not cleave the 4-Gln-|-His-5 bond in B chain of insulin.. With respect to regulation, inhibited by pepstatin. Acid protease active in intracellular protein breakdown. The chain is Cathepsin D (ctsd) from Clupea harengus (Atlantic herring).